The chain runs to 241 residues: 1-(5-phosphoribosyl)-5-[(5-phosphoribosylamino)methylideneamino] imidazole-4-carboxamide isomerase (241 aa).

Aspartate 8 serves as the catalytic Proton acceptor. The Proton donor role is filled by aspartate 129.

This sequence belongs to the HisA/HisF family.

It localises to the cytoplasm. It catalyses the reaction 1-(5-phospho-beta-D-ribosyl)-5-[(5-phospho-beta-D-ribosylamino)methylideneamino]imidazole-4-carboxamide = 5-[(5-phospho-1-deoxy-D-ribulos-1-ylimino)methylamino]-1-(5-phospho-beta-D-ribosyl)imidazole-4-carboxamide. It participates in amino-acid biosynthesis; L-histidine biosynthesis; L-histidine from 5-phospho-alpha-D-ribose 1-diphosphate: step 4/9. The sequence is that of 1-(5-phosphoribosyl)-5-[(5-phosphoribosylamino)methylideneamino] imidazole-4-carboxamide isomerase from Novosphingobium aromaticivorans (strain ATCC 700278 / DSM 12444 / CCUG 56034 / CIP 105152 / NBRC 16084 / F199).